We begin with the raw amino-acid sequence, 491 residues long: Pre-glycoprotein polyprotein GP complex (491 aa).

A lipid anchor (N-myristoyl glycine; by host) is attached at glycine 2. Over 2–17 (GQIVTFFQEVPHIIEE) the chain is Extracellular. The helical transmembrane segment at 18 to 33 (VMNIVLITLSLLAILK) threads the bilayer. The Cytoplasmic segment spans residues 34-58 (GIYNVMTCGLIGLLTFLFLCGKSCS). Residue cysteine 57 coordinates Zn(2+). The Extracellular portion of the chain corresponds to 59–432 (TIYKDNYRLM…QGTTPLGLVD (374 aa)). 6 N-linked (GlcNAc...) asparagine; by host glycosylation sites follow: asparagine 78, asparagine 88, asparagine 98, asparagine 108, asparagine 118, and asparagine 166. 6 disulfide bridges follow: cysteine 85-cysteine 231, cysteine 117-cysteine 154, cysteine 179-cysteine 212, cysteine 279-cysteine 292, cysteine 301-cysteine 310, and cysteine 364-cysteine 385. Asparagine 224 is a glycosylation site (N-linked (GlcNAc...) asparagine; by host). N-linked (GlcNAc...) asparagine; by host glycans are attached at residues asparagine 365, asparagine 373, asparagine 390, and asparagine 395. The helical transmembrane segment at 433–453 (LFVFSTSFYLISVFLHLIKIP) threads the bilayer. Residues 454–491 (THRHLVGKPCPKPHRLNHMGVCSCGLYKQPGLPTKWKR) lie on the Cytoplasmic side of the membrane. Zn(2+) contacts are provided by histidine 455, histidine 457, cysteine 463, histidine 467, cysteine 475, and cysteine 477.

Belongs to the arenaviridae GPC protein family. In terms of assembly, interacts with glycoprotein G2. Part of the GP complex (GP-C) together with glycoprotein G1 and glycoprotein G2. The GP-complex interacts with protein Z, which interacts with ribonucleocapsid; these interactions may induce virion budding. As to quaternary structure, homotrimer; disulfide-linked. In pre-fusion state, G1 homotrimers bind G2 homotrimers via ionic interactions. Part of the GP complex (GP-C) together with glycoprotein G2 and the stable signal peptide. The GP-complex interacts with protein Z, which interacts with ribonucleocapsid; these interactions may induce virion budding. Homotrimer. Interacts with the stable signal peptide. In pre-fusion state, G2 homotrimers bind G1 homotrimers via ionic interactions. Part of the GP complex (GP-C) together with glycoprotein G1 and the stable signal peptide. Acidification in the endosome triggers rearrangements, which ultimately leads to a 6 helix bundle formed by the two heptad repeat domains (HR1 and HR2) in post-fusion state. The GP-complex interacts with protein Z, which interacts with ribonucleocapsid; these interactions may induce virion budding. In terms of processing, specific enzymatic cleavages in vivo yield mature proteins. GP-C polyprotein is cleaved in the endoplasmic reticulum by the host protease MBTPS1. Only cleaved glycoprotein is incorporated into virions. Post-translationally, the SSP remains stably associated with the GP complex following cleavage by signal peptidase and plays crucial roles in the trafficking of GP through the secretory pathway. Myristoylation is necessary for GP2-mediated fusion activity.

It localises to the virion membrane. The protein localises to the host endoplasmic reticulum membrane. Its subcellular location is the host Golgi apparatus membrane. It is found in the host cell membrane. Functions as a cleaved signal peptide that is retained as the third component of the GP complex (GP-C). Helps to stabilize the spike complex in its native conformation. The SSP is required for efficient glycoprotein expression, post-translational maturation cleavage of G1 and G2, glycoprotein transport to the cell surface plasma membrane, formation of infectious virus particles, and acid pH-dependent glycoprotein-mediated cell fusion. Functionally, forms the virion spikes together with glycoprotein G2. The glycoprotein spike trimers are connected to the underlying matrix. Mediates virus attachment to host receptor alpha-dystroglycan DAG1. This attachment induces virion internalization predominantly through clathrin- and caveolin-independent endocytosis. In terms of biological role, forms the virion spikes together with glycoprotein G1. The glycoprotein spike trimers are connected to the underlying matrix. Class I viral fusion protein that directs fusion of viral and host endosomal membranes, leading to delivery of the nucleocapsid into the cytoplasm. Membrane fusion is mediated by irreversible conformational changes induced by acidification. This is Pre-glycoprotein polyprotein GP complex from Mobala mammarenavirus (isolate Rat/Central African Republic/Acar 3080/1983) (MOBV).